A 343-amino-acid polypeptide reads, in one-letter code: Protein RecA (343 aa).

66-73 (GPESSGKT) is an ATP binding site.

The protein belongs to the RecA family.

It is found in the cytoplasm. Can catalyze the hydrolysis of ATP in the presence of single-stranded DNA, the ATP-dependent uptake of single-stranded DNA by duplex DNA, and the ATP-dependent hybridization of homologous single-stranded DNAs. It interacts with LexA causing its activation and leading to its autocatalytic cleavage. The sequence is that of Protein RecA from Rickettsia africae (strain ESF-5).